A 299-amino-acid chain; its full sequence is Peroxisomal biogenesis factor 19 (299 aa).

A disordered region spans residues Met1–Asp61. At Ala2 the chain carries N-acetylalanine. The segment at Ala2–Gly56 is docking to the peroxisome membrane and binding to PEX3. The tract at residues Ala2–Met91 is necessary for PEX19 function on peroxisome biogenesis. Over residues Val12–Asp27 the composition is skewed to acidic residues. Residues Ser35 and Ser66 each carry the phosphoserine modification. Residue Thr236 is modified to Phosphothreonine. Cys296 bears the Cysteine methyl ester mark. Cys296 carries the S-farnesyl cysteine lipid modification. Positions Leu297–Met299 are cleaved as a propeptide — removed in mature form.

The protein belongs to the peroxin-19 family. As to quaternary structure, interacts with a broad range of peroxisomal membrane proteins, including PEX3, PEX10, PEX11A, PEX11B, PEX12, PEX13, PEX14 and PEX16, PXMP2/PMP22, PXMP4/PMP24, SLC25A17/PMP34, ABCD1/ALDP, ABCD2/ALDRP, and ABCD3/PMP70. Also interacts with the tumor suppressor CDKN2A/p19ARF.

Its subcellular location is the cytoplasm. It is found in the peroxisome membrane. Its function is as follows. Necessary for early peroxisomal biogenesis. Acts both as a cytosolic chaperone and as an import receptor for peroxisomal membrane proteins (PMPs). Binds and stabilizes newly synthesized PMPs in the cytoplasm by interacting with their hydrophobic membrane-spanning domains, and targets them to the peroxisome membrane by binding to the integral membrane protein PEX3. Excludes CDKN2A from the nucleus and prevents its interaction with MDM2, which results in active degradation of TP53. This Mus musculus (Mouse) protein is Peroxisomal biogenesis factor 19 (Pex19).